Reading from the N-terminus, the 363-residue chain is Flagellar P-ring protein 2 (363 aa).

The first 20 residues, 1–20, serve as a signal peptide directing secretion; sequence MKRIVLLLMSVALFSTAAQA.

It belongs to the FlgI family. The basal body constitutes a major portion of the flagellar organelle and consists of four rings (L,P,S, and M) mounted on a central rod.

The protein resides in the periplasm. Its subcellular location is the bacterial flagellum basal body. Its function is as follows. Assembles around the rod to form the L-ring and probably protects the motor/basal body from shearing forces during rotation. This is Flagellar P-ring protein 2 (flgI2) from Vibrio parahaemolyticus serotype O3:K6 (strain RIMD 2210633).